The following is a 219-amino-acid chain: UPF0376 protein C36C5.12 (219 aa).

Topologically, residues 1–20 (MGRLDVKNSWIEFHQDEMTS) are cytoplasmic. A helical; Signal-anchor for type II membrane protein transmembrane segment spans residues 21-43 (FLKLAIIGTVLLGVAHGANLTAA). The Extracellular portion of the chain corresponds to 44–219 (EKETYCELRS…VSKCDFSRLG (176 aa)). N-linked (GlcNAc...) asparagine glycosylation is found at asparagine 104 and asparagine 204.

It belongs to the UPF0376 family.

It is found in the membrane. The chain is UPF0376 protein C36C5.12 from Caenorhabditis elegans.